The sequence spans 681 residues: Pseudohemocyanin-2 (681 aa).

The signal sequence occupies residues valine 1–arginine 21. Asparagine 98, asparagine 191, asparagine 228, and asparagine 624 each carry an N-linked (GlcNAc...) asparagine glycan.

Belongs to the tyrosinase family. Hemocyanin subfamily. As to quaternary structure, hexamer. Strongly expressed in ovaries. Also expressed in heart. Not detected in hepatopancreas, gills, connective tissue or muscle.

Functionally, does not function as a hemocyanin. This is Pseudohemocyanin-2 from Homarus americanus (American lobster).